The chain runs to 59 residues: UPF0434 protein Rsph17025_2896 (59 aa).

This sequence belongs to the UPF0434 family.

The polypeptide is UPF0434 protein Rsph17025_2896 (Cereibacter sphaeroides (strain ATCC 17025 / ATH 2.4.3) (Rhodobacter sphaeroides)).